A 150-amino-acid chain; its full sequence is Ribonuclease H (150 aa).

The region spanning 1–141 is the RNase H type-1 domain; that stretch reads MKSIEVHTDG…VDVLARNQAT (141 aa). Residues Asp9, Glu47, Asp69, and Asp133 each contribute to the Mg(2+) site.

Belongs to the RNase H family. Monomer. Mg(2+) serves as cofactor.

It is found in the cytoplasm. The enzyme catalyses Endonucleolytic cleavage to 5'-phosphomonoester.. In terms of biological role, endonuclease that specifically degrades the RNA of RNA-DNA hybrids. This is Ribonuclease H from Xanthomonas oryzae pv. oryzae (strain MAFF 311018).